Reading from the N-terminus, the 303-residue chain is MSNKLTFQEIILTLQQYWNDQGCMLMQAYDNEKGAGTMSPYTFLRAIGPEPWNAAYVEPSRRPADGRYGENPNRLYQHHQFQVVMKPSPSNIQELYLQSLERLGIDPLEHDIRFVEDNWENPSTGSAGLGWEVWLDGMEITQFTYFQQVGGLATSPVTAEVTYGLERLASYIQEVDSVYDIEWAPGVKYGEIFLQPEYEHSKYSFEVSNQDMLLENFETFEKEAERALAQGLVHPAYDYVLKCSHTFNLLDARGAVSVTERAGYIARIRHLARSVAKTFVAERKKLGFPLLDDASRVALLAED.

This sequence belongs to the class-II aminoacyl-tRNA synthetase family. In terms of assembly, tetramer of two alpha and two beta subunits.

Its subcellular location is the cytoplasm. It catalyses the reaction tRNA(Gly) + glycine + ATP = glycyl-tRNA(Gly) + AMP + diphosphate. This Streptococcus equi subsp. zooepidemicus (strain H70) protein is Glycine--tRNA ligase alpha subunit.